The chain runs to 353 residues: Photosystem II protein D1 (353 aa).

The residue at position 2 (Thr2) is an N-acetylthreonine. Thr2 carries the post-translational modification Phosphothreonine. 3 consecutive transmembrane segments (helical) span residues Tyr29–Ser46, His118–Leu133, and Trp142–Ala156. Position 118 (His118) interacts with chlorophyll a. Tyr126 is a binding site for pheophytin a. The [CaMn4O5] cluster site is built by Asp170 and Glu189. The helical transmembrane segment at Phe197 to Leu218 threads the bilayer. His198 serves as a coordination point for chlorophyll a. A quinone-binding positions include His215 and Ser264–Phe265. Residue His215 coordinates Fe cation. His272 serves as a coordination point for Fe cation. Residues Phe274–Leu288 form a helical membrane-spanning segment. His332, Glu333, Asp342, and Ala344 together coordinate [CaMn4O5] cluster. The propeptide occupies Ala345–Gly353.

This sequence belongs to the reaction center PufL/M/PsbA/D family. PSII is composed of 1 copy each of membrane proteins PsbA, PsbB, PsbC, PsbD, PsbE, PsbF, PsbH, PsbI, PsbJ, PsbK, PsbL, PsbM, PsbT, PsbX, PsbY, PsbZ, Psb30/Ycf12, at least 3 peripheral proteins of the oxygen-evolving complex and a large number of cofactors. It forms dimeric complexes. Requires The D1/D2 heterodimer binds P680, chlorophylls that are the primary electron donor of PSII, and subsequent electron acceptors. It shares a non-heme iron and each subunit binds pheophytin, quinone, additional chlorophylls, carotenoids and lipids. D1 provides most of the ligands for the Mn4-Ca-O5 cluster of the oxygen-evolving complex (OEC). There is also a Cl(-1) ion associated with D1 and D2, which is required for oxygen evolution. The PSII complex binds additional chlorophylls, carotenoids and specific lipids. as cofactor. In terms of processing, tyr-161 forms a radical intermediate that is referred to as redox-active TyrZ, YZ or Y-Z. Post-translationally, C-terminally processed by CTPA; processing is essential to allow assembly of the oxygen-evolving complex and thus photosynthetic growth.

It is found in the plastid. The protein resides in the chloroplast thylakoid membrane. The enzyme catalyses 2 a plastoquinone + 4 hnu + 2 H2O = 2 a plastoquinol + O2. Photosystem II (PSII) is a light-driven water:plastoquinone oxidoreductase that uses light energy to abstract electrons from H(2)O, generating O(2) and a proton gradient subsequently used for ATP formation. It consists of a core antenna complex that captures photons, and an electron transfer chain that converts photonic excitation into a charge separation. The D1/D2 (PsbA/PsbD) reaction center heterodimer binds P680, the primary electron donor of PSII as well as several subsequent electron acceptors. The polypeptide is Photosystem II protein D1 (Lepidium virginicum (Virginia pepperweed)).